We begin with the raw amino-acid sequence, 378 residues long: D-alanine--D-alanine ligase (378 aa).

Residues lysine 149 to glutamate 374 enclose the ATP-grasp domain. Glutamate 189–glutamate 247 contacts ATP. Residues aspartate 328, glutamate 341, and asparagine 343 each contribute to the Mg(2+) site.

This sequence belongs to the D-alanine--D-alanine ligase family. It depends on Mg(2+) as a cofactor. Mn(2+) serves as cofactor.

It is found in the cytoplasm. It catalyses the reaction 2 D-alanine + ATP = D-alanyl-D-alanine + ADP + phosphate + H(+). It participates in cell wall biogenesis; peptidoglycan biosynthesis. Its function is as follows. Cell wall formation. The chain is D-alanine--D-alanine ligase from Bifidobacterium animalis subsp. lactis (strain AD011).